We begin with the raw amino-acid sequence, 278 residues long: Multidrug-efflux transporter 1 regulator (278 aa).

Positions 5–75 constitute an HTH merR-type domain; that stretch reads YYSIGEVSKL…LEEMKKAQDL (71 aa). A DNA-binding region (H-T-H motif) is located at residues 8–27; it reads IGEVSKLANVSIKALRYYDK.

As to quaternary structure, binds DNA as a homodimer.

In terms of biological role, activates transcription of the bmr gene in response to structurally dissimilar drugs. Binds rhodamine as an inducer. In Bacillus subtilis (strain 168), this protein is Multidrug-efflux transporter 1 regulator (bmrR).